A 548-amino-acid polypeptide reads, in one-letter code: MAAKDVKFGNDARVKMLRGVNVLADAVKVTLGPKGRNVVLDKSFGAPTITKDGVSVAREIELEDKFENMGAQMVKEVASKANDAAGDGTTTATVLAQSIITEGLKAVAAGMNPMDLKRGIDKAVAAAVEELKALSVPCSDSKAIAQVGTISANSDETVGKLIAEAMDKVGKEGVITVEDGTGLQDELDVVEGMQFDRGYLSPYFINKPETGAVELESPFILLADKKISNIREMLPVLEAVAKAGKPLLIIAEDVEGEALATLVVNTMRGIVKVAAVKAPGFGDRRKAMLQDIATLTGGTVISEEIGMELEKATLEDLGQAKRVVINKDTTTIIDGVGEEAAIQGRVAQIRQQIEEATSDYDREKLQERVAKLAGGVAVIKVGAATEVEMKEKKARVEDALHATRAAVEEGVVAGGGVALIRVASKIADLKGQNEDQNVGIKVALRAMEAPLRQIVLNCGEEPSVVANTVKGGDGNYGYNAATEEYGNMIDMGILDPTKVTRSALQYAASVAGLMITTECMVTDLPKSDAPDLGAAGGMGGMGGMGGMM.

Residues 30–33 (TLGP), Lys51, 87–91 (DGTTT), Gly415, 479–481 (NAA), and Asp495 contribute to the ATP site.

This sequence belongs to the chaperonin (HSP60) family. As to quaternary structure, forms a cylinder of 14 subunits composed of two heptameric rings stacked back-to-back. Interacts with the co-chaperonin GroES. In terms of processing, UMPylated on a tyrosine residue by YdiU under ATP-limited conditions.

The protein resides in the cytoplasm. It catalyses the reaction ATP + H2O + a folded polypeptide = ADP + phosphate + an unfolded polypeptide.. With respect to regulation, UMPylation of the chaperone by YdiU negatively regulates its activity, facilitating Salmonella survival under ATP-limited conditions. Together with its co-chaperonin GroES, plays an essential role in assisting protein folding. The GroEL-GroES system forms a nano-cage that allows encapsulation of the non-native substrate proteins and provides a physical environment optimized to promote and accelerate protein folding. This is Chaperonin GroEL from Salmonella typhimurium (strain LT2 / SGSC1412 / ATCC 700720).